The chain runs to 629 residues: Embryonic polyadenylate-binding protein (629 aa).

4 consecutive RRM domains span residues 11–89, 99–175, 191–268, and 294–370; these read ASLY…WSQR, GNVF…HFKS, TNVY…RAQK, and VNLY…LAQR. Residues 539–616 enclose the PABC domain; sequence QEPLTASSLA…AVAVLQAHQA (78 aa).

This sequence belongs to the polyadenylate-binding protein type-1 family. Interacts with dazl in an RNA-independent manner. The C-terminus can self-associate and also interact with the C-terminus of pabpc1, independently of RNA. RRM 1 and RRM 2 interact with both eif4g1 and paip1, and the C-terminus also interacts with paip1. Prior to oocyte maturation, found in a complex with dazl and pum2 proteins and spdy1 mRNA; pum2 dissociates from the complex during maturation. Interacts with the translation termination factor sup35/erf3.

The protein localises to the cytoplasm. In terms of biological role, binds and protects the poly(A) tail of mRNA with or without an AU-rich element (ARE) and prevents mRNA deadenylation. Stimulates the translation of mRNAs to which it is bound during early development. This chain is Embryonic polyadenylate-binding protein, found in Xenopus tropicalis (Western clawed frog).